We begin with the raw amino-acid sequence, 157 residues long: Transcription antitermination protein NusB (157 aa).

Belongs to the NusB family.

Functionally, involved in transcription antitermination. Required for transcription of ribosomal RNA (rRNA) genes. Binds specifically to the boxA antiterminator sequence of the ribosomal RNA (rrn) operons. This Xylella fastidiosa (strain 9a5c) protein is Transcription antitermination protein NusB.